Consider the following 128-residue polypeptide: Sulfurtransferase TusD (128 aa).

Cys78 functions as the Cysteine persulfide intermediate in the catalytic mechanism.

It belongs to the DsrE/TusD family. As to quaternary structure, heterohexamer, formed by a dimer of trimers. The hexameric TusBCD complex contains 2 copies each of TusB, TusC and TusD. The TusBCD complex interacts with TusE.

It is found in the cytoplasm. Functionally, part of a sulfur-relay system required for 2-thiolation of 5-methylaminomethyl-2-thiouridine (mnm(5)s(2)U) at tRNA wobble positions. Accepts sulfur from TusA and transfers it in turn to TusE. The sequence is that of Sulfurtransferase TusD from Escherichia coli (strain K12 / MC4100 / BW2952).